The primary structure comprises 179 residues: Nucleoside-triphosphatase THEP1 (179 aa).

ATP is bound by residues 7 to 14 (GRPGVGKT) and 94 to 101 (LIIVDEIG).

Belongs to the THEP1 NTPase family.

It catalyses the reaction a ribonucleoside 5'-triphosphate + H2O = a ribonucleoside 5'-diphosphate + phosphate + H(+). In terms of biological role, has nucleotide phosphatase activity towards ATP, GTP, CTP, TTP and UTP. May hydrolyze nucleoside diphosphates with lower efficiency. This is Nucleoside-triphosphatase THEP1 from Thermotoga petrophila (strain ATCC BAA-488 / DSM 13995 / JCM 10881 / RKU-1).